The chain runs to 335 residues: Ferredoxin--NADP reductase (335 aa).

The FAD site is built by D34, Q42, Y47, A87, F121, D287, and T328.

Belongs to the ferredoxin--NADP reductase type 2 family. In terms of assembly, homodimer. The cofactor is FAD.

The enzyme catalyses 2 reduced [2Fe-2S]-[ferredoxin] + NADP(+) + H(+) = 2 oxidized [2Fe-2S]-[ferredoxin] + NADPH. This chain is Ferredoxin--NADP reductase, found in Rickettsia felis (strain ATCC VR-1525 / URRWXCal2) (Rickettsia azadi).